We begin with the raw amino-acid sequence, 313 residues long: Ribosomal protein uL3 glutamine methyltransferase (313 aa).

Belongs to the protein N5-glutamine methyltransferase family. PrmB subfamily.

The catalysed reaction is L-glutaminyl-[ribosomal protein uL3] + S-adenosyl-L-methionine = N(5)-methyl-L-glutaminyl-[ribosomal protein uL3] + S-adenosyl-L-homocysteine + H(+). In terms of biological role, methylates large ribosomal subunit protein uL3 on a specific glutamine residue. This Pasteurella multocida (strain Pm70) protein is Ribosomal protein uL3 glutamine methyltransferase.